A 377-amino-acid polypeptide reads, in one-letter code: Phospho-N-acetylmuramoyl-pentapeptide-transferase (377 aa).

11 helical membrane-spanning segments follow: residues 9 to 29, 62 to 82, 85 to 105, 122 to 142, 155 to 175, 178 to 198, 210 to 230, 247 to 267, 274 to 294, 299 to 319, and 354 to 374; these read YITL…LVAG, MGGA…ADWI, FVWV…MDDY, FFWQ…AVSA, WVGS…VPFF, VSYP…IVGT, GLAI…AYVV, AAEL…FLWF, VFMG…IAVI, IVLF…MVQV, and QVVV…LSTL.

This sequence belongs to the glycosyltransferase 4 family. MraY subfamily. Mg(2+) serves as cofactor.

The protein localises to the cell inner membrane. The enzyme catalyses UDP-N-acetyl-alpha-D-muramoyl-L-alanyl-gamma-D-glutamyl-meso-2,6-diaminopimeloyl-D-alanyl-D-alanine + di-trans,octa-cis-undecaprenyl phosphate = di-trans,octa-cis-undecaprenyl diphospho-N-acetyl-alpha-D-muramoyl-L-alanyl-D-glutamyl-meso-2,6-diaminopimeloyl-D-alanyl-D-alanine + UMP. Its pathway is cell wall biogenesis; peptidoglycan biosynthesis. In terms of biological role, catalyzes the initial step of the lipid cycle reactions in the biosynthesis of the cell wall peptidoglycan: transfers peptidoglycan precursor phospho-MurNAc-pentapeptide from UDP-MurNAc-pentapeptide onto the lipid carrier undecaprenyl phosphate, yielding undecaprenyl-pyrophosphoryl-MurNAc-pentapeptide, known as lipid I. The protein is Phospho-N-acetylmuramoyl-pentapeptide-transferase of Bordetella parapertussis (strain 12822 / ATCC BAA-587 / NCTC 13253).